Here is a 360-residue protein sequence, read N- to C-terminus: Sphingolipid delta(4)-desaturase (360 aa).

3 consecutive transmembrane segments (helical) span residues 67–87 (AVVL…VLSF), 89–109 (FLAL…LCIH), and 125–145 (LFAI…FQPY). A Histidine box-1 motif is present at residues 109–113 (HELSH). A Histidine box-2 motif is present at residues 146–150 (HQLHH). Helical transmembrane passes span 170–190 (VLSS…FYAL), 202–222 (FIHL…IKFG), and 228–248 (WYLI…GHFI). The Histidine box-3 signature appears at 288-292 (HNEHH).

The protein belongs to the fatty acid desaturase type 1 family. DEGS subfamily.

It localises to the membrane. It carries out the reaction an N-acylsphinganine + 2 Fe(II)-[cytochrome b5] + O2 + 2 H(+) = an N-acylsphing-4-enine + 2 Fe(III)-[cytochrome b5] + 2 H2O. It participates in lipid metabolism; sphingolipid metabolism. Delta(4)-fatty-acid desaturase which introduces a double bond at the 4-position in the long-chain base (LCB) of ceramides. Required for the formation of the monounsaturated sphingoid base (E)-sphing-4-enine during glucosylceramide (GluCer) biosynthesis. This chain is Sphingolipid delta(4)-desaturase, found in Komagataella phaffii (strain GS115 / ATCC 20864) (Yeast).